We begin with the raw amino-acid sequence, 156 residues long: ATP synthase subunit b (156 aa).

A helical transmembrane segment spans residues 7-27 (LFAQIIVFFGLVWFTMKFVWP).

Belongs to the ATPase B chain family. In terms of assembly, F-type ATPases have 2 components, F(1) - the catalytic core - and F(0) - the membrane proton channel. F(1) has five subunits: alpha(3), beta(3), gamma(1), delta(1), epsilon(1). F(0) has three main subunits: a(1), b(2) and c(10-14). The alpha and beta chains form an alternating ring which encloses part of the gamma chain. F(1) is attached to F(0) by a central stalk formed by the gamma and epsilon chains, while a peripheral stalk is formed by the delta and b chains.

It localises to the cell inner membrane. Its function is as follows. F(1)F(0) ATP synthase produces ATP from ADP in the presence of a proton or sodium gradient. F-type ATPases consist of two structural domains, F(1) containing the extramembraneous catalytic core and F(0) containing the membrane proton channel, linked together by a central stalk and a peripheral stalk. During catalysis, ATP synthesis in the catalytic domain of F(1) is coupled via a rotary mechanism of the central stalk subunits to proton translocation. In terms of biological role, component of the F(0) channel, it forms part of the peripheral stalk, linking F(1) to F(0). The sequence is that of ATP synthase subunit b from Neisseria meningitidis serogroup C (strain 053442).